Reading from the N-terminus, the 158-residue chain is NAD(P)H-quinone oxidoreductase subunit N (158 aa).

Belongs to the complex I NdhN subunit family. In terms of assembly, NDH-1 can be composed of about 15 different subunits; different subcomplexes with different compositions have been identified which probably have different functions.

It is found in the cellular thylakoid membrane. The catalysed reaction is a plastoquinone + NADH + (n+1) H(+)(in) = a plastoquinol + NAD(+) + n H(+)(out). It catalyses the reaction a plastoquinone + NADPH + (n+1) H(+)(in) = a plastoquinol + NADP(+) + n H(+)(out). Functionally, NDH-1 shuttles electrons from an unknown electron donor, via FMN and iron-sulfur (Fe-S) centers, to quinones in the respiratory and/or the photosynthetic chain. The immediate electron acceptor for the enzyme in this species is believed to be plastoquinone. Couples the redox reaction to proton translocation, and thus conserves the redox energy in a proton gradient. Cyanobacterial NDH-1 also plays a role in inorganic carbon-concentration. This Microcystis aeruginosa (strain NIES-843 / IAM M-2473) protein is NAD(P)H-quinone oxidoreductase subunit N.